Here is a 209-residue protein sequence, read N- to C-terminus: MSTAVLNKHLADAHEVGHDHDHAHDSGGNTVFGFWLYLMTDCVLFASVFATYAVLVHHTAGGPSGKDIFELPYVLVETAILLVSSCTYGLAMLSAHKGAKGQAIAWLGVTFLLGAAFIGMEINEFHHLIAEGFGPSRSAFLSSFFTLVGMHGLHVSAGLLWMLVLMAQIWTRGLTAQNNTRMMCLSLFWHFLDIVWICVFTVVYLMGAL.

Residues 1 to 29 (MSTAVLNKHLADAHEVGHDHDHAHDSGGN) lie on the Cytoplasmic side of the membrane. Residues 30–50 (TVFGFWLYLMTDCVLFASVFA) form a helical membrane-spanning segment. The Periplasmic portion of the chain corresponds to 51-72 (TYAVLVHHTAGGPSGKDIFELP). The chain crosses the membrane as a helical span at residues 73–93 (YVLVETAILLVSSCTYGLAML). Over 94 to 102 (SAHKGAKGQ) the chain is Cytoplasmic. Residues 103–123 (AIAWLGVTFLLGAAFIGMEIN) traverse the membrane as a helical segment. The Periplasmic portion of the chain corresponds to 124–143 (EFHHLIAEGFGPSRSAFLSS). Residues 144-164 (FFTLVGMHGLHVSAGLLWMLV) traverse the membrane as a helical segment. Residues 165 to 186 (LMAQIWTRGLTAQNNTRMMCLS) lie on the Cytoplasmic side of the membrane. Residues 187–207 (LFWHFLDIVWICVFTVVYLMG) traverse the membrane as a helical segment. At 208–209 (AL) the chain is on the periplasmic side.

This sequence belongs to the cytochrome c oxidase subunit 3 family. As to quaternary structure, heterooctamer of two A chains, two B chains, two C chains and two D chains.

It localises to the cell inner membrane. Cytochrome bo(3) ubiquinol terminal oxidase is the component of the aerobic respiratory chain of E.coli that predominates when cells are grown at high aeration. Has proton pump activity across the membrane in addition to electron transfer, pumping 2 protons/electron. The sequence is that of Cytochrome bo(3) ubiquinol oxidase subunit 3 (cyoC) from Pseudomonas aeruginosa (strain ATCC 15692 / DSM 22644 / CIP 104116 / JCM 14847 / LMG 12228 / 1C / PRS 101 / PAO1).